Here is a 90-residue protein sequence, read N- to C-terminus: Lantipeptide prochlorosin 1.7 (90 aa).

Residues 1–68 (MSEEQLKAFI…DAELEGVAGG (68 aa)) constitute a propeptide that is removed on maturation. 2 positions are modified to 2,3-didehydrobutyrine: Thr-69 and Thr-73. The segment at residues 76–79 (SITC) is a cross-link (lanthionine (Ser-Cys)). 2 consecutive cross-links (beta-methyllanthionine (Thr-Cys)) follow at residues 78–82 (TCETC) and 81–90 (TCDLLVGKMC).

In terms of processing, cross-links are proved in vitro, when coepressed in E.coli with the ProcM lanthionine synthetase. The lanthionine residue has a DL configuration (with 2S,6R stereochemistry), whereas the beta-methyllanthionine residues have a DL configuration (with 2S,3S,6R stereochemistry). Post-translationally, maturation of prochlorosin involves the enzymatic conversion of Thr, and Ser into dehydrated AA and the formation of thioether bonds with cysteines. This is followed by membrane translocation and cleavage of the modified precursor.

The protein localises to the secreted. Functionally, lanthionine-containing peptide (lantipeptide) with unknown function. Does not show antibiotic activity against Lactococcus lactis 117 and Bacillus subtilis 6633 bacteria. Organisms that produce this peptide live in oligotrophic environments at very dilute concentrations, suggesting this peptide is not secreted to influence other bacteria. In Prochlorococcus marinus (strain MIT 9313), this protein is Lantipeptide prochlorosin 1.7.